A 472-amino-acid polypeptide reads, in one-letter code: Adenosylhomocysteinase (472 aa).

The substrate site is built by Thr64, Asp138, and Glu198. 199–201 (TTT) is an NAD(+) binding site. Substrate-binding residues include Lys228 and Asp232. Residues Asn233, 262-267 (GFGDVG), Glu285, Asn320, 341-343 (IGH), and Asn386 each bind NAD(+).

It belongs to the adenosylhomocysteinase family. NAD(+) is required as a cofactor.

The protein resides in the cytoplasm. The enzyme catalyses S-adenosyl-L-homocysteine + H2O = L-homocysteine + adenosine. It functions in the pathway amino-acid biosynthesis; L-homocysteine biosynthesis; L-homocysteine from S-adenosyl-L-homocysteine: step 1/1. Its function is as follows. May play a key role in the regulation of the intracellular concentration of adenosylhomocysteine. This Prochlorococcus marinus (strain MIT 9312) protein is Adenosylhomocysteinase.